We begin with the raw amino-acid sequence, 300 residues long: Ribokinase (300 aa).

Substrate contacts are provided by residues 11 to 13 (SMD), 39 to 43 (GKGAN), and Glu139. ATP is bound by residues Asn183 and 210–215 (TLGSEG). Positions 236 and 238 each coordinate K(+). 241–242 (GD) contributes to the ATP binding site. Residue Asp242 coordinates substrate. Asp242 acts as the Proton acceptor in catalysis. K(+) contacts are provided by Ser272, Lys275, and Gly277.

It belongs to the carbohydrate kinase PfkB family. Ribokinase subfamily. In terms of assembly, homodimer. The cofactor is Mg(2+).

It is found in the cytoplasm. The catalysed reaction is D-ribose + ATP = D-ribose 5-phosphate + ADP + H(+). It participates in carbohydrate metabolism; D-ribose degradation; D-ribose 5-phosphate from beta-D-ribopyranose: step 2/2. Its activity is regulated as follows. Activated by a monovalent cation that binds near, but not in, the active site. The most likely occupant of the site in vivo is potassium. Ion binding induces a conformational change that may alter substrate affinity. Catalyzes the phosphorylation of ribose at O-5 in a reaction requiring ATP and magnesium. The resulting D-ribose-5-phosphate can then be used either for sythesis of nucleotides, histidine, and tryptophan, or as a component of the pentose phosphate pathway. The sequence is that of Ribokinase from Lactococcus lactis subsp. lactis (strain IL1403) (Streptococcus lactis).